The chain runs to 326 residues: Type II methyltransferase M.CviAII (326 aa).

It belongs to the N(4)/N(6)-methyltransferase family.

It catalyses the reaction a 2'-deoxyadenosine in DNA + S-adenosyl-L-methionine = an N(6)-methyl-2'-deoxyadenosine in DNA + S-adenosyl-L-homocysteine + H(+). Its function is as follows. An alpha subtype methylase that recognizes the double-stranded sequence 5'-CATG-3', methylates A-2 on both strands and protects the DNA from cleavage by the CviAII endonuclease. This chain is Type II methyltransferase M.CviAII (CVIAIIM), found in Paramecium bursaria Chlorella virus 1 (PBCV-1).